We begin with the raw amino-acid sequence, 152 residues long: uncharacterized protein (152 aa).

3 helical membrane passes run Leu-13 to Phe-33, Leu-38 to Met-58, and Trp-69 to Ile-89.

Its subcellular location is the cell membrane. This is an uncharacterized protein from Mycoplasma pneumoniae (strain ATCC 29342 / M129 / Subtype 1) (Mycoplasmoides pneumoniae).